We begin with the raw amino-acid sequence, 156 residues long: Small ribosomal subunit protein uS7 (156 aa).

The protein belongs to the universal ribosomal protein uS7 family. As to quaternary structure, part of the 30S ribosomal subunit. Contacts proteins S9 and S11.

Its function is as follows. One of the primary rRNA binding proteins, it binds directly to 16S rRNA where it nucleates assembly of the head domain of the 30S subunit. Is located at the subunit interface close to the decoding center, probably blocks exit of the E-site tRNA. This Klebsiella pneumoniae (strain 342) protein is Small ribosomal subunit protein uS7.